We begin with the raw amino-acid sequence, 471 residues long: Probable ribonuclease FAU-1 (471 aa).

An S1 motif domain is found at 93-139 (GAVFDAAVDHTVGGGAILDLGDDREAYLPFGAVDDHVTDGDTLRVAI).

It belongs to the FAU-1 family.

Probable RNase involved in rRNA stability through maturation and/or degradation of precursor rRNAs. Binds to RNA in loop regions with AU-rich sequences. The sequence is that of Probable ribonuclease FAU-1 from Halobacterium salinarum (strain ATCC 29341 / DSM 671 / R1).